The sequence spans 100 residues: Urease subunit gamma (100 aa).

The protein belongs to the urease gamma subunit family. As to quaternary structure, heterotrimer of UreA (gamma), UreB (beta) and UreC (alpha) subunits. Three heterotrimers associate to form the active enzyme.

The protein resides in the cytoplasm. It carries out the reaction urea + 2 H2O + H(+) = hydrogencarbonate + 2 NH4(+). It functions in the pathway nitrogen metabolism; urea degradation; CO(2) and NH(3) from urea (urease route): step 1/1. The polypeptide is Urease subunit gamma (Allorhizobium ampelinum (strain ATCC BAA-846 / DSM 112012 / S4) (Agrobacterium vitis (strain S4))).